The chain runs to 337 residues: Large ribosomal subunit protein uL3 (337 aa).

Belongs to the universal ribosomal protein uL3 family. Part of the 50S ribosomal subunit. Forms a cluster with proteins L14 and L24e.

Functionally, one of the primary rRNA binding proteins, it binds directly near the 3'-end of the 23S rRNA, where it nucleates assembly of the 50S subunit. The sequence is that of Large ribosomal subunit protein uL3 from Methanospirillum hungatei JF-1 (strain ATCC 27890 / DSM 864 / NBRC 100397 / JF-1).